We begin with the raw amino-acid sequence, 283 residues long: Chromatin modification-related protein png1 (283 aa).

The segment covering 137-171 (YSPSGASSARQTPAPSRSGASTAGRRRTSATTRGA) has biased composition (low complexity). The tract at residues 137–224 (YSPSGASSAR…NEMVSEEDME (88 aa)) is disordered. Positions 181 to 216 (YTASLADSGSTRGQKVSNATATTQLETKADSTTPNE) are enriched in polar residues. A PHD-type zinc finger spans residues 228 to 277 (EKYCFCQQGSYGQMVACDNANCEREWFHMECVGLKAPPEGTWYCEACRDQ). Positions 231, 233, 244, 249, 255, 258, 271, and 274 each coordinate Zn(2+).

It belongs to the ING family. Interacts with H3K4me3 and to a lesser extent with H3K4me2. Component of a histone deacetylase complex.

The protein localises to the nucleus. In terms of biological role, component of a histone deacetylase complex responsible for the deacetylation of lysine residues on the N-terminal part of the core histones (H2A, H2B, H3 and H4). Histone deacetylation gives a tag for epigenetic repression and plays an important role in transcriptional regulation, cell cycle progression and developmental events. Has a role in silencing of mating type genes. The polypeptide is Chromatin modification-related protein png1 (png1) (Schizosaccharomyces pombe (strain 972 / ATCC 24843) (Fission yeast)).